The sequence spans 414 residues: GLABROUS1 enhancer-binding protein-like 3 (414 aa).

Disordered regions lie at residues 36 to 57 and 167 to 191; these read QLRT…LSSS and QAKD…DRDV. Positions 38-50 are enriched in low complexity; it reads RTTTTRTTTTRTT. Residues 382–403 are non-canonical leucine-zipper; it reads LINEWKALFVDEQRLCVKKLTF.

This sequence belongs to the GeBP family. Homo- and heterodimers. Interacts with GEBP, GPL1 and GPL2. Interacts with GEBP. Expressed in the apical meristem and young leaf primordia. Detected in the vascular tissues of rosette leaves, in primary and secondary roots and at the base of flowers and siliques.

The protein resides in the nucleus. Probable transcription factor. Involved in stress responses. Plays a repressive role in cell expansion by counteracting the positive role of CPR5 in this process, but does not regulate cell proliferation or endoreduplication. In Arabidopsis thaliana (Mouse-ear cress), this protein is GLABROUS1 enhancer-binding protein-like 3.